A 600-amino-acid polypeptide reads, in one-letter code: Arginine--tRNA ligase (600 aa).

The short motif at 132–142 (ANPTGPLHVGH) is the 'HIGH' region element.

It belongs to the class-I aminoacyl-tRNA synthetase family. As to quaternary structure, monomer.

The protein localises to the cytoplasm. The enzyme catalyses tRNA(Arg) + L-arginine + ATP = L-arginyl-tRNA(Arg) + AMP + diphosphate. The protein is Arginine--tRNA ligase of Ralstonia nicotianae (strain ATCC BAA-1114 / GMI1000) (Ralstonia solanacearum).